The primary structure comprises 465 residues: ATP-sulfurylase 3, chloroplastic (465 aa).

The N-terminal 49 residues, 1-49, are a transit peptide targeting the chloroplast; sequence MASMSTVFPKPTSFISQPLTKSHKSDSVTTSISFPSNSKTRSLRTISVR.

This sequence belongs to the sulfate adenylyltransferase family. In terms of assembly, homotetramer.

It is found in the plastid. The protein localises to the chloroplast stroma. The enzyme catalyses sulfate + ATP + H(+) = adenosine 5'-phosphosulfate + diphosphate. It participates in sulfur metabolism; hydrogen sulfide biosynthesis; sulfite from sulfate: step 1/3. The protein is ATP-sulfurylase 3, chloroplastic (APS3) of Arabidopsis thaliana (Mouse-ear cress).